A 240-amino-acid polypeptide reads, in one-letter code: CRISPR-associated protein Cas5 3 (240 aa).

Belongs to the CRISPR-associated protein Cas5 family. Subtype I-A/Apern subfamily. As to quaternary structure, part of the aCascade ribonucleoprotein complex.

Functionally, CRISPR (clustered regularly interspaced short palindromic repeat) is an adaptive immune system that provides protection against mobile genetic elements (viruses, transposable elements and conjugative plasmids). CRISPR clusters contain spacers, sequences complementary to antecedent mobile elements, and target invading nucleic acids. CRISPR clusters are transcribed and processed into CRISPR RNA (crRNA). The chain is CRISPR-associated protein Cas5 3 (cas5c) from Saccharolobus solfataricus (strain ATCC 35092 / DSM 1617 / JCM 11322 / P2) (Sulfolobus solfataricus).